The chain runs to 169 residues: Putative phosphoesterase SERP0604 (169 aa).

His-34 acts as the Proton donor in catalysis. 2 consecutive short sequence motifs (HXTX) follow at residues 34 to 37 and 115 to 118; these read HITI and HFTI. His-115 functions as the Proton acceptor in the catalytic mechanism.

It belongs to the 2H phosphoesterase superfamily. YjcG family.

This is Putative phosphoesterase SERP0604 from Staphylococcus epidermidis (strain ATCC 35984 / DSM 28319 / BCRC 17069 / CCUG 31568 / BM 3577 / RP62A).